The following is a 464-amino-acid chain: Protein FAM90A7 (464 aa).

Disordered regions lie at residues 1–42, 69–387, and 410–437; these read MMAR…DPRL, VPAT…AGHD, and AAPS…SEAP. Composition is skewed to basic and acidic residues over residues 74–89 and 97–111; these read GKKE…KPRA and NKDK…RQQD. Low complexity predominate over residues 180–197; sequence LASLSPLRKASLSSSSSL.

The protein belongs to the FAM90 family.

In Homo sapiens (Human), this protein is Protein FAM90A7.